Reading from the N-terminus, the 114-residue chain is Small ribosomal subunit protein uS17 (114 aa).

This sequence belongs to the universal ribosomal protein uS17 family. As to quaternary structure, part of the 30S ribosomal subunit.

Its function is as follows. One of the primary rRNA binding proteins, it binds specifically to the 5'-end of 16S ribosomal RNA. The polypeptide is Small ribosomal subunit protein uS17 (Saccharolobus solfataricus (strain ATCC 35092 / DSM 1617 / JCM 11322 / P2) (Sulfolobus solfataricus)).